Reading from the N-terminus, the 629-residue chain is MFYPEQFDVIIIGGGHAGTEAAMAAARMGRQTLLLTHNIDTLGQMSCNPAIGGIGKGHLVKEIDALGGLMATAIDHAGIQFRILNASKGPAVRATRAQADRVLYRQAVRTALENQPNLMIFQQPVEDLIVENDRVVGAVTQMGLKFRAKAVVLTVGTFLDGKIHIGLENYSGGRAGDPPSISLSQRLRELPLRVNRLKTGTPPRIDARSIDFSVLAPQHGDTPIPVFSFMGNAGQHPEQMACYITYTNEKTHDVIRNNLDRSPMYAGIIEGIGPRYCPSIEDKVMRFADRNAHQIFLEPEGLTSNEIYPNGISTSLPFDVQMQIVRSMEGMQNARIIRPGYAIEYDFFDPRDLKPTLESKFIQGLFFAGQINGTTGYEEAAAQGLLAGLNAGRYANEDEGWSPRRDQAYLGVLVDDLSTLGTKEPYRMFTSRAEYRLMLREDNADLRLTEKGRELGLVDDARWARFSEKLEHIEQERQRLRDIWMHPHAENVEQVNALLKAPLSREANGEELLRRPEMDYTQLTSVAAFAPPLADTQAAEQVEIQVKYEGYIARQQEEIEKQQRNENTVLPLDLDYQQVSGLSNEVIAKLNDHKPNSIGQASRISGITPAAISILLIWLKKQGLLRRSA.

Residues 13 to 18 (GGGHAG), Val-125, and Ser-180 each bind FAD. Residue 273 to 287 (GPRYCPSIEDKVMRF) participates in NAD(+) binding. Residue Gln-370 participates in FAD binding.

Belongs to the MnmG family. Homodimer. Heterotetramer of two MnmE and two MnmG subunits. Requires FAD as cofactor.

Its subcellular location is the cytoplasm. NAD-binding protein involved in the addition of a carboxymethylaminomethyl (cmnm) group at the wobble position (U34) of certain tRNAs, forming tRNA-cmnm(5)s(2)U34. This chain is tRNA uridine 5-carboxymethylaminomethyl modification enzyme MnmG, found in Serratia proteamaculans (strain 568).